We begin with the raw amino-acid sequence, 589 residues long: Sulfite reductase [NADPH] hemoprotein beta-component (589 aa).

The [4Fe-4S] cluster site is built by Cys443, Cys449, Cys488, and Cys492. Cys492 contacts siroheme.

It belongs to the nitrite and sulfite reductase 4Fe-4S domain family. As to quaternary structure, alpha(8)-beta(8). The alpha component is a flavoprotein, the beta component is a hemoprotein. It depends on siroheme as a cofactor. The cofactor is [4Fe-4S] cluster.

The enzyme catalyses hydrogen sulfide + 3 NADP(+) + 3 H2O = sulfite + 3 NADPH + 4 H(+). It functions in the pathway sulfur metabolism; hydrogen sulfide biosynthesis; hydrogen sulfide from sulfite (NADPH route): step 1/1. Functionally, component of the sulfite reductase complex that catalyzes the 6-electron reduction of sulfite to sulfide. This is one of several activities required for the biosynthesis of L-cysteine from sulfate. The sequence is that of Sulfite reductase [NADPH] hemoprotein beta-component from Neisseria meningitidis serogroup C / serotype 2a (strain ATCC 700532 / DSM 15464 / FAM18).